A 743-amino-acid polypeptide reads, in one-letter code: NAD(P)H-quinone oxidoreductase subunit 5, chloroplastic (743 aa).

Transmembrane regions (helical) follow at residues 9-29 (WIIP…LLLF), 40-60 (WAFQ…NLSI), 89-109 (IDPL…MVLI), 125-145 (FAYM…SNLI), 147-167 (IYIF…FWFT), 185-205 (GDFG…SFEF), 219-239 (NEVN…GAIA), 258-278 (TPIS…FLVA), 284-304 (FIVI…TVFF), 327-347 (LGYM…FHLI), 354-374 (ALLF…VGYC), 396-416 (NSFL…CFWS), 425-445 (WLYS…TAFY), 551-571 (LFPI…GIPF), 607-627 (VFSV…YKPV), and 723-743 (YLFF…FLNL).

This sequence belongs to the complex I subunit 5 family. In terms of assembly, NDH is composed of at least 16 different subunits, 5 of which are encoded in the nucleus.

It localises to the plastid. The protein localises to the chloroplast thylakoid membrane. It catalyses the reaction a plastoquinone + NADH + (n+1) H(+)(in) = a plastoquinol + NAD(+) + n H(+)(out). The enzyme catalyses a plastoquinone + NADPH + (n+1) H(+)(in) = a plastoquinol + NADP(+) + n H(+)(out). Its function is as follows. NDH shuttles electrons from NAD(P)H:plastoquinone, via FMN and iron-sulfur (Fe-S) centers, to quinones in the photosynthetic chain and possibly in a chloroplast respiratory chain. The immediate electron acceptor for the enzyme in this species is believed to be plastoquinone. Couples the redox reaction to proton translocation, and thus conserves the redox energy in a proton gradient. This chain is NAD(P)H-quinone oxidoreductase subunit 5, chloroplastic (ndhF), found in Ambrosia trifida (Giant ragweed).